A 421-amino-acid chain; its full sequence is ATP-dependent RNA helicase RhlB (421 aa).

Residues 9–37 (QKFSDFALHPVVVQALEKKGFYNCTPIQA) carry the Q motif motif. The 180-residue stretch at 40-219 (LPLTLAGRDV…FEQMNNAEYV (180 aa)) folds into the Helicase ATP-binding domain. Position 53–60 (53–60 (AQTGTGKT)) interacts with ATP. Positions 165–168 (DEAD) match the DEAD box motif. Positions 245-390 (RLLQTLIEEE…VSKYNPDALL (146 aa)) constitute a Helicase C-terminal domain. Positions 390–421 (LSELPPPKRLSRPRTGNGPRRSGAPRNRRRTG) are disordered. Over residues 405 to 414 (GNGPRRSGAP) the composition is skewed to low complexity.

It belongs to the DEAD box helicase family. RhlB subfamily. Component of the RNA degradosome, which is a multiprotein complex involved in RNA processing and mRNA degradation.

It is found in the cytoplasm. It catalyses the reaction ATP + H2O = ADP + phosphate + H(+). Functionally, DEAD-box RNA helicase involved in RNA degradation. Has RNA-dependent ATPase activity and unwinds double-stranded RNA. The protein is ATP-dependent RNA helicase RhlB of Cronobacter sakazakii (strain ATCC BAA-894) (Enterobacter sakazakii).